We begin with the raw amino-acid sequence, 303 residues long: Putative S-adenosyl-L-methionine-dependent methyltransferase SCO6443 (303 aa).

Residues aspartate 130 and 159–160 each bind S-adenosyl-L-methionine; that span reads DL.

The protein belongs to the UPF0677 family.

In terms of biological role, exhibits S-adenosyl-L-methionine-dependent methyltransferase activity. In Streptomyces coelicolor (strain ATCC BAA-471 / A3(2) / M145), this protein is Putative S-adenosyl-L-methionine-dependent methyltransferase SCO6443.